Here is a 324-residue protein sequence, read N- to C-terminus: ATP phosphoribosyltransferase regulatory subunit (324 aa).

The protein belongs to the class-II aminoacyl-tRNA synthetase family. HisZ subfamily. In terms of assembly, heteromultimer composed of HisG and HisZ subunits.

The protein resides in the cytoplasm. Its pathway is amino-acid biosynthesis; L-histidine biosynthesis; L-histidine from 5-phospho-alpha-D-ribose 1-diphosphate: step 1/9. Its function is as follows. Required for the first step of histidine biosynthesis. May allow the feedback regulation of ATP phosphoribosyltransferase activity by histidine. The protein is ATP phosphoribosyltransferase regulatory subunit of Carboxydothermus hydrogenoformans (strain ATCC BAA-161 / DSM 6008 / Z-2901).